Consider the following 137-residue polypeptide: Small ribosomal subunit protein uS9c (137 aa).

The interval 106–137 (KSEGYLTRDPRVKERKKYGLKKARKAPQFSKR) is disordered. Basic residues predominate over residues 118–137 (KERKKYGLKKARKAPQFSKR).

This sequence belongs to the universal ribosomal protein uS9 family.

The protein resides in the plastid. Its subcellular location is the chloroplast. This Pyropia yezoensis (Susabi-nori) protein is Small ribosomal subunit protein uS9c (rps9).